The primary structure comprises 360 residues: Ferrochelatase (360 aa).

Fe cation contacts are provided by H210 and E291.

It belongs to the ferrochelatase family.

It is found in the cytoplasm. The catalysed reaction is heme b + 2 H(+) = protoporphyrin IX + Fe(2+). It functions in the pathway porphyrin-containing compound metabolism; protoheme biosynthesis; protoheme from protoporphyrin-IX: step 1/1. Its function is as follows. Catalyzes the ferrous insertion into protoporphyrin IX. In Pseudoalteromonas atlantica (strain T6c / ATCC BAA-1087), this protein is Ferrochelatase.